A 208-amino-acid chain; its full sequence is Uracil phosphoribosyltransferase (208 aa).

5-phospho-alpha-D-ribose 1-diphosphate contacts are provided by residues Arg78, Arg103, and 130–138; that span reads DPMLATGGS. Uracil-binding positions include Ile193 and 198–200; that span reads GDA. Asp199 lines the 5-phospho-alpha-D-ribose 1-diphosphate pocket.

The protein belongs to the UPRTase family. It depends on Mg(2+) as a cofactor.

The enzyme catalyses UMP + diphosphate = 5-phospho-alpha-D-ribose 1-diphosphate + uracil. It functions in the pathway pyrimidine metabolism; UMP biosynthesis via salvage pathway; UMP from uracil: step 1/1. With respect to regulation, allosterically activated by GTP. Its function is as follows. Catalyzes the conversion of uracil and 5-phospho-alpha-D-ribose 1-diphosphate (PRPP) to UMP and diphosphate. The protein is Uracil phosphoribosyltransferase of Actinobacillus pleuropneumoniae serotype 5b (strain L20).